Consider the following 293-residue polypeptide: Diaminopimelate epimerase (293 aa).

The substrate site is built by asparagine 11 and asparagine 78. The active-site Proton donor is the cysteine 87. Residues glycine 88–asparagine 89, asparagine 166, asparagine 202, and glutamate 220–arginine 221 each bind substrate. Residue cysteine 229 is the Proton acceptor of the active site. Substrate is bound at residue glycine 230–threonine 231.

It belongs to the diaminopimelate epimerase family. Homodimer.

The protein localises to the cytoplasm. It carries out the reaction (2S,6S)-2,6-diaminopimelate = meso-2,6-diaminopimelate. It participates in amino-acid biosynthesis; L-lysine biosynthesis via DAP pathway; DL-2,6-diaminopimelate from LL-2,6-diaminopimelate: step 1/1. Functionally, catalyzes the stereoinversion of LL-2,6-diaminopimelate (L,L-DAP) to meso-diaminopimelate (meso-DAP), a precursor of L-lysine and an essential component of the bacterial peptidoglycan. This chain is Diaminopimelate epimerase, found in Mycobacterium sp. (strain JLS).